The primary structure comprises 158 residues: Protein-export protein SecB (158 aa).

This sequence belongs to the SecB family. Homotetramer, a dimer of dimers. One homotetramer interacts with 1 SecA dimer.

It localises to the cytoplasm. Functionally, one of the proteins required for the normal export of preproteins out of the cell cytoplasm. It is a molecular chaperone that binds to a subset of precursor proteins, maintaining them in a translocation-competent state. It also specifically binds to its receptor SecA. The polypeptide is Protein-export protein SecB (Pectobacterium atrosepticum (strain SCRI 1043 / ATCC BAA-672) (Erwinia carotovora subsp. atroseptica)).